The chain runs to 249 residues: MEGSSKGLRKGAWTAEEDSLLRLCIDKYGEGKWHQVPLRAGLNRCRKSCRLRWLNYLKPSIKRGRLSNDEVDLLLRLHKLLGNRWSLIAGRLPGRTANDVKNYWNTHLSKKHESSCCKSKMKKKNIISPPTTPVQKIGVFKPRPRSFSVNNGCSHLNGLPEVDLIPSCLGLKKNNVCENSITCNKDDEKDDFVNNLMNGDNMWLENLLGENQEADAIVPEATTAEHGATLAFDVEQLWSLFDGETVELD.

HTH myb-type domains follow at residues 5–57 (SKGL…LNYL) and 58–112 (KPSI…SKKH). 2 DNA-binding regions (H-T-H motif) span residues 33-57 (WHQV…LNYL) and 85-108 (WSLI…NTHL).

Interacts with BHLH12/MYC1, BHLH1/GL3/MYC6, BHLH2/EGL3/MYC146, and BHLH42/TT8. Expressed only in leaves and siliques.

It localises to the nucleus. Transcription activator, when associated with BHLH12/MYC1, EGL3, or GL3. Promotes the synthesis of phenylpropanoid-derived compounds such as anthocyanins. This chain is Transcription factor MYB90 (MYB90), found in Arabidopsis thaliana (Mouse-ear cress).